We begin with the raw amino-acid sequence, 813 residues long: Origin of replication complex subunit 1B (813 aa).

The disordered stretch occupies residues 1–109 (MASTPRAKTF…TPKKKKKIDS (109 aa)). A compositionally biased stretch (polar residues) spans 11-21 (KSPTKTPSNIY). A compositionally biased stretch (low complexity) spans 27–41 (SPSSTSHTPQTPETH). Basic residues predominate over residues 43-52 (PLRRSARHVS). Positions 83 to 90 (PRKPTTDV) match the Nuclear localization signal motif. The histone H3 binding stretch occupies residues 163–187 (DPEIEDCQICFKSDTNIMIECDDCL). Residues 166–215 (IEDCQICFKSDTNIMIECDDCLGGFHLKCLKPPLKEVPEGDWICQFCEVK) form a PHD-type zinc finger. Cys-169, Cys-172, Cys-183, Cys-186, His-191, and Cys-194 together coordinate Zn(2+). The interval 203–207 (PEGDW) is histone H3 binding. 2 residues coordinate Zn(2+): Cys-209 and Cys-212. The 119-residue stretch at 226 to 344 (PKPPEGKKLA…VHWRSFKRLA (119 aa)) folds into the BAH domain. The segment at 319–324 (ASNDGD) is histone H3 binding. Positions 349–372 (GDSDSDQEWNGRKEEEVDDSDEEM) are disordered. The necessary and sufficient for ORC complex assembly stretch occupies residues 436–803 (PKSLPCRSKE…DDVAFALKDN (368 aa)). An ATP-binding site is contributed by 471–479 (GVPGTGKTI). Mg(2+) is bound by residues Asp-561 and Glu-562. ATP contacts are provided by Glu-562, Asn-595, and Arg-660.

Belongs to the ORC1 family. Component of the origin recognition complex (ORC) composed of at least ORC1 (ORC1A or ORC1B), ORC2, ORC3, ORC4, ORC5 and ORC6. ORC is regulated in a cell-cycle and development dependent manner. It is sequentially assembled at the exit from anaphase of mitosis and disassembled as cells enter S phase. Interacts directly with ORC2 and ORC5. Binds mostly unmodified histone H3, and, with lower efficiency, H3K4me1 H3K4me2 and H3K4me3. In terms of tissue distribution, follow a cell-cycle regulation with a peak at the G1/S-phase. Mostly expressed in flower buds, and, to a lower exent, in roots, leaves and stems.

The protein localises to the nucleus. Functionally, essential protein required for ovules fertilization. Component of the origin recognition complex (ORC) that binds origins of replication. It has a role in both chromosomal replication and mating type transcriptional silencing. Binds to the ARS consensus sequence (ACS) of origins of replication. H3K4me3 effector that positively regulates the transcription of a subset of genes. The chain is Origin of replication complex subunit 1B from Arabidopsis thaliana (Mouse-ear cress).